Reading from the N-terminus, the 193-residue chain is MTYEMPKLPYANNALEPVISQQTIDYHYGKHLQTYVNNLNSLVPGTEYEGKTVEAIVASAPDGAIFNNAGQVLNHTLYFLQFAPKPAKNEPAGKLGEAIKRDFGSFENFKKEFNAASVGLFGSGWAWLSVDKDGKLHITKEPNGSNPVRAGLKPLLGFDVWEHAYYLDYQNRRADHVNKLWEIIDWDVVEKRL.

Residues histidine 27, histidine 75, aspartate 159, and histidine 163 each contribute to the Fe cation site.

It belongs to the iron/manganese superoxide dismutase family. As to quaternary structure, homodimer. Requires Fe cation as cofactor.

It catalyses the reaction 2 superoxide + 2 H(+) = H2O2 + O2. Destroys superoxide anion radicals which are normally produced within the cells and which are toxic to biological systems. This Bacteroides fragilis (strain YCH46) protein is Superoxide dismutase [Fe] (sodB).